The sequence spans 322 residues: NADH-quinone oxidoreductase subunit H (322 aa).

A run of 8 helical transmembrane segments spans residues Ile15–Leu35, Ile82–Pro102, Ile114–Gly134, Ala149–Ala169, Val186–Leu206, Ile243–Phe263, Gly265–Ile285, and Trp302–Ile322.

Belongs to the complex I subunit 1 family. In terms of assembly, NDH-1 is composed of 13 different subunits. Subunits NuoA, H, J, K, L, M, N constitute the membrane sector of the complex.

It is found in the cell membrane. It catalyses the reaction a quinone + NADH + 5 H(+)(in) = a quinol + NAD(+) + 4 H(+)(out). Its function is as follows. NDH-1 shuttles electrons from NADH, via FMN and iron-sulfur (Fe-S) centers, to quinones in the respiratory chain. The immediate electron acceptor for the enzyme in this species is believed to be ubiquinone. Couples the redox reaction to proton translocation (for every two electrons transferred, four hydrogen ions are translocated across the cytoplasmic membrane), and thus conserves the redox energy in a proton gradient. This subunit may bind ubiquinone. This chain is NADH-quinone oxidoreductase subunit H, found in Buchnera aphidicola subsp. Schizaphis graminum (strain Sg).